A 498-amino-acid chain; its full sequence is Tumor necrosis factor receptor superfamily member 8 (498 aa).

Residues M1–A18 form the signal peptide. Residues F19 to G287 lie on the Extracellular side of the membrane. TNFR-Cys repeat units follow at residues Q68–C105 and E106–C146. 5 disulfides stabilise this stretch: C69-C81, C84-C97, C87-C105, C107-C121, and C128-C146. A disordered region spans residues K142–S168. Positions P149 to P160 are enriched in low complexity. 3 N-linked (GlcNAc...) asparagine glycosylation sites follow: N156, N183, and N229. Residues E204–A256 form a disordered region. Residues D242 to A256 are compositionally biased toward polar residues. The chain crosses the membrane as a helical span at residues P288 to C308. Over Y309–K498 the chain is Cytoplasmic. Residues D338–S358 are compositionally biased toward polar residues. Disordered regions lie at residues D338–P370, L389–E411, and E436–K498. S339 and S353 each carry phosphoserine. Basic and acidic residues-rich tracts occupy residues E402–E411, E456–E465, and E484–K498.

Belongs to the TNFR8 family. Interacts with TRAF1, TRAF2, TRAF3 and TRAF5. As to expression, detected in thymus and in activated splenocytes.

The protein resides in the cell membrane. In terms of biological role, receptor for TNFSF8/CD30L. May play a role in the regulation of cellular growth and transformation of activated lymphoblasts. Regulates gene expression through activation of NF-kappa-B. The sequence is that of Tumor necrosis factor receptor superfamily member 8 from Mus musculus (Mouse).